We begin with the raw amino-acid sequence, 573 residues long: Proline--tRNA ligase (573 aa).

This sequence belongs to the class-II aminoacyl-tRNA synthetase family. ProS type 1 subfamily. In terms of assembly, homodimer.

The protein localises to the cytoplasm. The enzyme catalyses tRNA(Pro) + L-proline + ATP = L-prolyl-tRNA(Pro) + AMP + diphosphate. Catalyzes the attachment of proline to tRNA(Pro) in a two-step reaction: proline is first activated by ATP to form Pro-AMP and then transferred to the acceptor end of tRNA(Pro). As ProRS can inadvertently accommodate and process non-cognate amino acids such as alanine and cysteine, to avoid such errors it has two additional distinct editing activities against alanine. One activity is designated as 'pretransfer' editing and involves the tRNA(Pro)-independent hydrolysis of activated Ala-AMP. The other activity is designated 'posttransfer' editing and involves deacylation of mischarged Ala-tRNA(Pro). The misacylated Cys-tRNA(Pro) is not edited by ProRS. The sequence is that of Proline--tRNA ligase from Moorella thermoacetica (strain ATCC 39073 / JCM 9320).